We begin with the raw amino-acid sequence, 1081 residues long: uncharacterized protein (1081 aa).

2 coiled-coil regions span residues 18–131 and 173–242; these read AIEE…FEEN and NHDE…NDDK. A compositionally biased stretch (basic and acidic residues) spans 22-53; that stretch reads NNKNREIQEKRQKETKDRNDRMVQNQKDRKEM. The tract at residues 22 to 60 is disordered; it reads NNKNREIQEKRQKETKDRNDRMVQNQKDRKEMIGLTNEK. Disordered regions lie at residues 250–321 and 388–1081; these read TDDE…KPGI and QEPK…GNDE. A compositionally biased stretch (pro residues) spans 267-283; sequence TPTPTPTPTPTPTPTPT. 2 stretches are compositionally biased toward low complexity: residues 284-313 and 396-410; these read PTTT…KTST and NNQS…QAGD. Positions 411-421 are enriched in basic and acidic residues; that stretch reads DQNKNQNRDEN. Low complexity-rich tracts occupy residues 422–568, 576–602, 614–623, 633–644, 662–672, and 680–733; these read NQGG…NNQE, NQDG…GGEN, GENNQDGGEN, DGENNQDGGENN, GENNQDGGENN, and QDGG…NNQD. 3 stretches are compositionally biased toward acidic residues: residues 748-768, 778-832, and 840-854; these read GGED…DNQD, NNQD…DENN, and QDGD…DENN. Low complexity-rich tracts occupy residues 855–869 and 877–888; these read NQDG…GENN and NQDGGENNQDGE. The span at 889-954 shows a compositional bias: acidic residues; the sequence is NNQDGDENNN…GDENNQDGDE (66 aa). Low complexity-rich tracts occupy residues 955 to 975, 983 to 1026, and 1034 to 1081; these read NNQG…GGDE, ENNQ…GGDE, and GENN…GNDE.

This is an uncharacterized protein from Dictyostelium discoideum (Social amoeba).